A 148-amino-acid chain; its full sequence is MAETKVILTKSVNHLGHPGDVVAVKSGYARNYLFPQGLAFAWSKGAAAQIEAMKRARLAKAVATREEAVAAKEIIEGSTVEIAAKVSESGKLFGGISAEKIAIALSSKVEVNPKNITVEPIKTTGDFPATVALHPEITANFFVKVVAE.

The protein belongs to the bacterial ribosomal protein bL9 family.

Functionally, binds to the 23S rRNA. This is Large ribosomal subunit protein bL9 from Bifidobacterium adolescentis (strain ATCC 15703 / DSM 20083 / NCTC 11814 / E194a).